We begin with the raw amino-acid sequence, 348 residues long: Bombesin receptor-activated protein C6orf89 homolog (348 aa).

At 1 to 58 the chain is on the cytoplasmic side; it reads MDLAANEISIYDKLSETVDLVRQTGHQCGMSEKAIEKFIRQLLEKNEPQRGPPQYPLL. A helical transmembrane segment spans residues 59 to 79; the sequence is IAMYKVLLTLGLILFTAYFVI. Residues 80–348 lie on the Extracellular side of the membrane; the sequence is QPFSSLAPEP…ICDGTTLSEL (269 aa).

In terms of assembly, homodimer. Interacts with BRS3. Interacts (via N-terminus) with SIN3B. Post-translationally, glycosylated.

The protein resides in the golgi apparatus membrane. It localises to the cytoplasm. Exhibits histone deacetylase (HDAC) enhancer properties. May play a role in cell cycle progression and wound repair of bronchial epithelial cells. This Rattus norvegicus (Rat) protein is Bombesin receptor-activated protein C6orf89 homolog.